The following is a 523-amino-acid chain: GMP synthase [glutamine-hydrolyzing] (523 aa).

Residues 8-205 enclose the Glutamine amidotransferase type-1 domain; it reads KILILDFGSQ…VVNICGCETK (198 aa). Cys-85 acts as the Nucleophile in catalysis. Catalysis depends on residues His-179 and Glu-181. The GMPS ATP-PPase domain maps to 206–398; that stretch reads WTAENIIEDA…LGLPAEMINR (193 aa). 233–239 contacts ATP; it reads SGGVDSS.

As to quaternary structure, homodimer.

It catalyses the reaction XMP + L-glutamine + ATP + H2O = GMP + L-glutamate + AMP + diphosphate + 2 H(+). The protein operates within purine metabolism; GMP biosynthesis; GMP from XMP (L-Gln route): step 1/1. Catalyzes the synthesis of GMP from XMP. In Haemophilus influenzae (strain PittEE), this protein is GMP synthase [glutamine-hydrolyzing].